Consider the following 222-residue polypeptide: Homing endonuclease I-ApeI (222 aa).

As to quaternary structure, probably functions as a monomer. It depends on Mg(2+) as a cofactor. Requires Mn(2+) as cofactor.

Endonuclease involved in 16S rRNA intron I-alpha homing. Recognizes the minimal target 5'-GCAAGGCTGAAACTTAAAGG-3'; generates 4 base 3' protruding ends 5'-AAAC-3' and 5'-GTTT-3'. In Aeropyrum pernix (strain ATCC 700893 / DSM 11879 / JCM 9820 / NBRC 100138 / K1), this protein is Homing endonuclease I-ApeI (apeI).